Consider the following 364-residue polypeptide: Phenylalanine dehydrogenase (364 aa).

Arg-62 provides a ligand contact to NAD(+). Lys-86 lines the L-phenylalanine pocket. Lys-98 serves as the catalytic Proton donor/acceptor. NAD(+)-binding positions include Asp-133, Ser-164, Thr-168, 255-256 (AM), and 276-278 (AAN). Residue Asn-278 participates in L-phenylalanine binding.

Belongs to the Glu/Leu/Phe/Val dehydrogenases family.

It catalyses the reaction L-phenylalanine + NAD(+) + H2O = 3-phenylpyruvate + NH4(+) + NADH + H(+). It functions in the pathway amino-acid biosynthesis; L-phenylalanine biosynthesis; L-phenylalanine from phenylpyruvate (PDH route): step 1/1. Functionally, catalyzes the reversible NAD(+)-dependent oxidative deamination of L-phenylalanine to phenylpyruvate. The polypeptide is Phenylalanine dehydrogenase (Rhodococcus jostii (strain RHA1)).